The following is a 268-amino-acid chain: Phosphatidylglycerol--prolipoprotein diacylglyceryl transferase (268 aa).

4 helical membrane-spanning segments follow: residues 23 to 43 (WYAL…LALA), 58 to 78 (FLTW…VLFY), 96 to 116 (GGMS…LFCW), and 119 to 139 (GLSP…GLFF). Residue Arg141 coordinates a 1,2-diacyl-sn-glycero-3-phospho-(1'-sn-glycerol). Transmembrane regions (helical) follow at residues 181–201 (SFLE…MPAV), 206–226 (GMTA…AEFF), and 238–258 (AGAT…VWLV).

Belongs to the Lgt family.

The protein resides in the cell inner membrane. The catalysed reaction is L-cysteinyl-[prolipoprotein] + a 1,2-diacyl-sn-glycero-3-phospho-(1'-sn-glycerol) = an S-1,2-diacyl-sn-glyceryl-L-cysteinyl-[prolipoprotein] + sn-glycerol 1-phosphate + H(+). The protein operates within protein modification; lipoprotein biosynthesis (diacylglyceryl transfer). Catalyzes the transfer of the diacylglyceryl group from phosphatidylglycerol to the sulfhydryl group of the N-terminal cysteine of a prolipoprotein, the first step in the formation of mature lipoproteins. This Azospirillum brasilense protein is Phosphatidylglycerol--prolipoprotein diacylglyceryl transferase.